The primary structure comprises 225 residues: Phosphoribosyltransferase domain-containing protein 1 (225 aa).

Alanine 2 bears the N-acetylalanine mark. Residues glutamate 141 and aspartate 142 each contribute to the Mg(2+) site. Residues 141–149, lysine 173, 194–195, and aspartate 201 each bind GMP; these read EDVVGTGRT and FV. Aspartate 201 contributes to the Mg(2+) binding site.

The protein belongs to the purine/pyrimidine phosphoribosyltransferase family. As to quaternary structure, homodimer.

Functionally, has low, barely detectable phosphoribosyltransferase activity (in vitro). Binds GMP, IMP and alpha-D-5-phosphoribosyl 1-pyrophosphate (PRPP). Is not expected to contribute to purine metabolism or GMP salvage. In Homo sapiens (Human), this protein is Phosphoribosyltransferase domain-containing protein 1 (PRTFDC1).